Here is a 171-residue protein sequence, read N- to C-terminus: Cardioactive peptide (171 aa).

Residues 1 to 26 (MQMYHVVLGCSLAILLVILDIPQASC) form the signal peptide. Positions 27–49 (DDVVIQKRQVDPAEMDRLLDPKR) are excised as a propeptide. A disulfide bridge connects residues Cys54 and Cys60. Residue Cys60 is modified to Cysteine amide. Positions 64-171 (RSDESMGTLV…QEEITKPWSR (108 aa)) are excised as a propeptide. Residues 116–171 (QSNQFGAGMDRPLPLPIAGYRRKRFADPESQAPAPHSNLPRATSQLQEEITKPWSR) form a disordered region.

Central nervous system; most neurons exhibit coexpression with burs.

It localises to the secreted. Its function is as follows. Cardioregulatory neurohormone that increases heart beat rate during adult wing inflation; has no effect on beat amplitude. The effect of CCAP is both ino- and chronotropic. The protein is Cardioactive peptide of Periplaneta americana (American cockroach).